The chain runs to 261 residues: Imidazole glycerol phosphate synthase subunit HisF (261 aa).

Residues Asp-11 and Asp-130 contribute to the active site.

It belongs to the HisA/HisF family. In terms of assembly, heterodimer of HisH and HisF.

It localises to the cytoplasm. It carries out the reaction 5-[(5-phospho-1-deoxy-D-ribulos-1-ylimino)methylamino]-1-(5-phospho-beta-D-ribosyl)imidazole-4-carboxamide + L-glutamine = D-erythro-1-(imidazol-4-yl)glycerol 3-phosphate + 5-amino-1-(5-phospho-beta-D-ribosyl)imidazole-4-carboxamide + L-glutamate + H(+). It functions in the pathway amino-acid biosynthesis; L-histidine biosynthesis; L-histidine from 5-phospho-alpha-D-ribose 1-diphosphate: step 5/9. In terms of biological role, IGPS catalyzes the conversion of PRFAR and glutamine to IGP, AICAR and glutamate. The HisF subunit catalyzes the cyclization activity that produces IGP and AICAR from PRFAR using the ammonia provided by the HisH subunit. In Limosilactobacillus fermentum (strain NBRC 3956 / LMG 18251) (Lactobacillus fermentum), this protein is Imidazole glycerol phosphate synthase subunit HisF.